The primary structure comprises 222 residues: V-type ATP synthase subunit D (222 aa).

Belongs to the V-ATPase D subunit family.

Its function is as follows. Produces ATP from ADP in the presence of a proton gradient across the membrane. In Acetivibrio thermocellus (strain ATCC 27405 / DSM 1237 / JCM 9322 / NBRC 103400 / NCIMB 10682 / NRRL B-4536 / VPI 7372) (Clostridium thermocellum), this protein is V-type ATP synthase subunit D.